A 374-amino-acid polypeptide reads, in one-letter code: S-adenosylmethionine:tRNA ribosyltransferase-isomerase (374 aa).

The protein belongs to the QueA family. In terms of assembly, monomer.

The protein localises to the cytoplasm. The catalysed reaction is 7-aminomethyl-7-carbaguanosine(34) in tRNA + S-adenosyl-L-methionine = epoxyqueuosine(34) in tRNA + adenine + L-methionine + 2 H(+). It functions in the pathway tRNA modification; tRNA-queuosine biosynthesis. Transfers and isomerizes the ribose moiety from AdoMet to the 7-aminomethyl group of 7-deazaguanine (preQ1-tRNA) to give epoxyqueuosine (oQ-tRNA). The polypeptide is S-adenosylmethionine:tRNA ribosyltransferase-isomerase (Prochlorococcus marinus (strain MIT 9215)).